The sequence spans 806 residues: Transitional endoplasmic reticulum ATPase (806 aa).

Phosphoserine is present on Ser3. Residues 247 to 253 (PGTGKTL), Asn348, His384, and 521 to 526 (GCGKTL) each bind ATP. Disordered stretches follow at residues 708–727 (RRER…EDDP) and 768–806 (FGSF…DLYG). Over residues 768–778 (FGSFRFPSSNQ) the composition is skewed to low complexity. Residues 779-794 (GGSGPSQGSSGGGGGN) are compositionally biased toward gly residues.

Belongs to the AAA ATPase family. Homohexamer.

The protein localises to the cytoplasm. The protein resides in the cytosol. It localises to the endoplasmic reticulum. Its subcellular location is the nucleus. The enzyme catalyses ATP + H2O = ADP + phosphate + H(+). Necessary for the fragmentation of Golgi stacks during mitosis and for their reassembly after mitosis. Involved in the formation of the nuclear envelope, and of the transitional endoplasmic reticulum (tER). The transfer of membranes from the endoplasmic reticulum to the Golgi apparatus occurs via 50-70 nm transition vesicles which derive from part-rough, part-smooth transitional elements of the endoplasmic reticulum (tER). Vesicle budding from the tER is an ATP-dependent process. Also involved in DNA damage response: recruited to double-strand breaks (DSBs) sites and promotes the recruitment of tp53bp1 at DNA damage sites. Together with sprtn metalloprotease, involved in the repair of covalent DNA-protein cross-links (DPCs) during DNA synthesis. Involved in interstrand cross-link repair in response to replication stress by mediating unloading of the ubiquitinated CMG helicase complex. Enhances cell cycle progression and inhibits apoptosis at low temperatures. Essential for the maturation of ubiquitin-containing autophagosomes and the clearance of ubiquitinated protein by autophagy. Acts as a negative regulator of type I interferon production by promoting ubiquitination of RIGI. May play a role in the ubiquitin-dependent sorting of membrane proteins to lysosomes where they undergo degradation. May more particularly play a role in caveolins sorting in cells. By controlling the steady-state expression of the IGF1R receptor, indirectly regulates the insulin-like growth factor receptor signaling pathway. The protein is Transitional endoplasmic reticulum ATPase of Danio rerio (Zebrafish).